We begin with the raw amino-acid sequence, 472 residues long: Lactate utilization protein B (472 aa).

4Fe-4S ferredoxin-type domains are found at residues 304–334 (GTEFQPVLQCIRCAACVNVCPVYRHIGGHSY) and 353–382 (YDDYKELPYASTLCAACTEACPVKIPLHEL). [4Fe-4S] cluster is bound by residues Cys313, Cys316, Cys319, Cys323, Cys366, Cys369, and Cys373.

Belongs to the LutB/YkgF family.

In terms of biological role, is involved in L-lactate degradation and allows cells to grow with lactate as the sole carbon source. Has probably a role as an electron transporter during oxidation of L-lactate. This chain is Lactate utilization protein B, found in Anoxybacillus flavithermus (strain DSM 21510 / WK1).